The following is a 918-amino-acid chain: Plasma membrane ATPase 1 (918 aa).

Positions 1 to 18 are enriched in low complexity; sequence MTDTSSSSSSSSASSVSA. Residues 1–84 form a disordered region; sequence MTDTSSSSSS…VPEEYLQTDP (84 aa). Topologically, residues 1–115 are cytoplasmic; sequence MTDTSSSSSS…ADEKESLVVK (115 aa). Over residues 33–47 the composition is skewed to acidic residues; it reads AASESSDDDDIDALI. Phosphoserine is present on serine 61. The chain crosses the membrane as a helical span at residues 116–136; that stretch reads FVMFFVGPIQFVMEAAAILAA. Residues 137-140 are Extracellular-facing; sequence GLSD. Residues 141–160 traverse the membrane as a helical segment; it reads WVDFGVICGLLMLNAGVGFV. Residues 161–291 are Cytoplasmic-facing; the sequence is QEFQAGSIVD…GQGHFTEVLN (131 aa). Threonine 175 carries the phosphothreonine modification. Lysine 252 is covalently cross-linked (Glycyl lysine isopeptide (Lys-Gly) (interchain with G-Cter in ubiquitin)). Residues 292 to 313 form a helical membrane-spanning segment; that stretch reads GIGIILLVLVIATLLLVWTACF. The Extracellular segment spans residues 314–325; that stretch reads YRTNGIVRILRY. The chain crosses the membrane as a helical span at residues 326-347; the sequence is TLGITIIGVPVGLPAVVTTTMA. Over 348–719 the chain is Cytoplasmic; it reads VGAAYLAKKQ…IAILDNSLDI (372 aa). Aspartate 378 serves as the catalytic 4-aspartylphosphate intermediate. A Glycyl lysine isopeptide (Lys-Gly) (interchain with G-Cter in ubiquitin) cross-link involves residue lysine 555. 2 residues coordinate Mg(2+): aspartate 634 and aspartate 638. The helical transmembrane segment at 720 to 738 threads the bilayer; the sequence is DLIVFIAIFADVATLAIAY. At 739 to 754 the chain is on the extracellular side; it reads DNAPYSPKPVKWNLPR. Residues 755 to 774 traverse the membrane as a helical segment; it reads LWGMSIILGIVLAIGSWITL. Residues 775 to 824 lie on the Cytoplasmic side of the membrane; sequence TTMFLPKGGIIQNFGAMNGIMFLQISLTENWLIFITRAAGPFWSSIPSWQ. The helical transmembrane segment at 825–845 threads the bilayer; it reads LAGAVFAVDIIATMFTLFGWW. Over 846–857 the chain is Extracellular; the sequence is SENWTDIVTVVR. A helical transmembrane segment spans residues 858 to 874; sequence VWIWSIGIFCVLGGFYY. Over 875 to 918 the chain is Cytoplasmic; it reads EMSTSEAFDRLMNGKPMKEKKSTRSVEDFMAAMQRVSTQHEKET. Position 911 is a phosphoserine (serine 911). Threonine 912 and threonine 918 each carry phosphothreonine.

This sequence belongs to the cation transport ATPase (P-type) (TC 3.A.3) family. Type IIIA subfamily. In terms of assembly, interacts with its cargot receptor EXP1 for its transport within the cell and maturation. Phosphorylated on multiple Ser and Thr residues.

The protein localises to the cell membrane. The catalysed reaction is ATP + H2O + H(+)(in) = ADP + phosphate + 2 H(+)(out). The plasma membrane ATPase of plants and fungi is a hydrogen ion pump. The proton gradient it generates drives the active transport of nutrients by H(+)-symport. The resulting external acidification and/or internal alkinization may mediate growth responses. The sequence is that of Plasma membrane ATPase 1 (PMA1) from Saccharomyces cerevisiae (strain ATCC 204508 / S288c) (Baker's yeast).